We begin with the raw amino-acid sequence, 434 residues long: Epimerase FSL3 (434 aa).

A substrate-binding site is contributed by 125–126; the sequence is GF. The Proton acceptor role is filled by E392.

This sequence belongs to the aldose epimerase family. In terms of assembly, monomer.

Its pathway is secondary metabolite biosynthesis. In terms of biological role, epimerase; part of the gene cluster that mediates the biosynthesis of fusarielins F, G and H, decaketide compounds with 5 methylations and a decaline core that act as mycoestrogens as they stimulate growth of MCF-7 breast cancer cells. The initial compound in the pathway is produced by the reducing polyketide synthase FSL1. FSL1 lacks an active enoyl reductase (ER) domain and biosynthesis of fusarielins relies on the trans-acting enoyl reductase FSL5, before it is released through hydrolysis catalyzed by the thioesterase FSL2. Fusarielins F, G, and H have a C11=C12 cis double bond and is fully reduced between C10 and C11 and between C12 and C13. FSL3 can be involved in the formation of the C11=C12 cis double bond by moving a hypothetical C10=C11 or C12=C13 trans double bond to form prefusarielin. Prefusarielin is oxygenated at C15 and C16 by the cytochrome P450 monooxygenase FSL4, resulting in fusarielin F, which subsequently is epoxidized into fusarielin G by the same enzyme. The final step in the pathway is a reduction of the carboxylic acid moiety to yield fusarielin H via a still undetermined mechanism. The protein is Epimerase FSL3 of Gibberella zeae (strain ATCC MYA-4620 / CBS 123657 / FGSC 9075 / NRRL 31084 / PH-1) (Wheat head blight fungus).